A 492-amino-acid chain; its full sequence is Glutamyl-tRNA(Gln) amidotransferase subunit A (492 aa).

Residues K81 and S156 each act as charge relay system in the active site. The active-site Acyl-ester intermediate is S180.

Belongs to the amidase family. GatA subfamily. As to quaternary structure, heterotrimer of A, B and C subunits.

It catalyses the reaction L-glutamyl-tRNA(Gln) + L-glutamine + ATP + H2O = L-glutaminyl-tRNA(Gln) + L-glutamate + ADP + phosphate + H(+). Functionally, allows the formation of correctly charged Gln-tRNA(Gln) through the transamidation of misacylated Glu-tRNA(Gln) in organisms which lack glutaminyl-tRNA synthetase. The reaction takes place in the presence of glutamine and ATP through an activated gamma-phospho-Glu-tRNA(Gln). The polypeptide is Glutamyl-tRNA(Gln) amidotransferase subunit A (Rhodococcus erythropolis (strain PR4 / NBRC 100887)).